The following is a 250-amino-acid chain: Diphthine synthase (250 aa).

Residues leucine 9, aspartate 85, valine 88, 113 to 114 (SI), leucine 165, alanine 202, and histidine 227 contribute to the S-adenosyl-L-methionine site.

Belongs to the diphthine synthase family. As to quaternary structure, homodimer.

It catalyses the reaction 2-[(3S)-amino-3-carboxypropyl]-L-histidyl-[translation elongation factor 2] + 3 S-adenosyl-L-methionine = diphthine-[translation elongation factor 2] + 3 S-adenosyl-L-homocysteine + 3 H(+). The protein operates within protein modification; peptidyl-diphthamide biosynthesis. Functionally, S-adenosyl-L-methionine-dependent methyltransferase that catalyzes the trimethylation of the amino group of the modified target histidine residue in translation elongation factor 2 (EF-2), to form an intermediate called diphthine. The three successive methylation reactions represent the second step of diphthamide biosynthesis. This chain is Diphthine synthase, found in Methanoregula boonei (strain DSM 21154 / JCM 14090 / 6A8).